Here is a 335-residue protein sequence, read N- to C-terminus: Anthranilate phosphoribosyltransferase (335 aa).

5-phospho-alpha-D-ribose 1-diphosphate-binding positions include glycine 79, 82 to 83 (GD), threonine 87, 89 to 92 (NVST), 107 to 115 (KHGSRSVSS), and serine 119. An anthranilate-binding site is contributed by glycine 79. Residue serine 91 coordinates Mg(2+). Position 165 (arginine 165) interacts with anthranilate. Mg(2+) is bound by residues aspartate 223 and glutamate 224.

It belongs to the anthranilate phosphoribosyltransferase family. As to quaternary structure, homodimer. It depends on Mg(2+) as a cofactor.

The enzyme catalyses N-(5-phospho-beta-D-ribosyl)anthranilate + diphosphate = 5-phospho-alpha-D-ribose 1-diphosphate + anthranilate. It participates in amino-acid biosynthesis; L-tryptophan biosynthesis; L-tryptophan from chorismate: step 2/5. Functionally, catalyzes the transfer of the phosphoribosyl group of 5-phosphorylribose-1-pyrophosphate (PRPP) to anthranilate to yield N-(5'-phosphoribosyl)-anthranilate (PRA). The chain is Anthranilate phosphoribosyltransferase from Helicobacter pylori (strain HPAG1).